Here is a 209-residue protein sequence, read N- to C-terminus: High frequency lysogenization protein HflD homolog (209 aa).

This sequence belongs to the HflD family.

It is found in the cytoplasm. It localises to the cell inner membrane. The polypeptide is High frequency lysogenization protein HflD homolog (Sodalis glossinidius (strain morsitans)).